The sequence spans 451 residues: MLLDEIKNLNFLIMGLGLNGGGVALSRFLLKRGAKLVITDLKSETELALSIDALRDFEDQIRYVLGKHDVNDFKNADIVVKNPGVKPNNKYLKFAKRIETDISLFLMFNKNPIVAVTGTKGKSTLVSLLYQALKEKYPGVKLGGNIGVSPLSFFDQLDGKSPLILELSSWQLQSLENFNPIISIITNVYNDHQNYYLNFDDYIIDKSKIFVNQTSGIVIIQDQAYCKYFSKFKSKVRVILFSEFNPCDFDQDIFYCNEGKVYFNDSLIGSFSNSRAVFIIPKVITFFVSYYLNIDLNRTGQILSNFKGIEHRLEFVKSVQNVMFYNDTASTIPESTVLSVKSLKTKDNRINLIVGGTDKELDFLSFSKIADIVRTWILIRGSATVKIIKILEKSSIQYFLFDSLRDAVNYAFKISSPGDIVLFSPASASFELFNNEFDRGLQFKNLVNNLG.

118 to 124 (GTKGKST) contacts ATP.

It belongs to the MurCDEF family.

It localises to the cytoplasm. The enzyme catalyses UDP-N-acetyl-alpha-D-muramoyl-L-alanine + D-glutamate + ATP = UDP-N-acetyl-alpha-D-muramoyl-L-alanyl-D-glutamate + ADP + phosphate + H(+). It participates in cell wall biogenesis; peptidoglycan biosynthesis. Functionally, cell wall formation. Catalyzes the addition of glutamate to the nucleotide precursor UDP-N-acetylmuramoyl-L-alanine (UMA). The polypeptide is UDP-N-acetylmuramoylalanine--D-glutamate ligase (murD) (Borreliella burgdorferi (strain ATCC 35210 / DSM 4680 / CIP 102532 / B31) (Borrelia burgdorferi)).